The chain runs to 440 residues: Xaa-Pro dipeptidase (440 aa).

Aspartate 244, aspartate 255, histidine 335, glutamate 380, and glutamate 419 together coordinate Mn(2+).

This sequence belongs to the peptidase M24B family. Bacterial-type prolidase subfamily. Mn(2+) serves as cofactor.

The catalysed reaction is Xaa-L-Pro dipeptide + H2O = an L-alpha-amino acid + L-proline. Functionally, splits dipeptides with a prolyl residue in the C-terminal position. In Shewanella baltica (strain OS195), this protein is Xaa-Pro dipeptidase.